We begin with the raw amino-acid sequence, 462 residues long: Probable DNA-directed RNA polymerase subunit 343L (462 aa).

Belongs to the RNA polymerase beta' chain family.

It catalyses the reaction RNA(n) + a ribonucleoside 5'-triphosphate = RNA(n+1) + diphosphate. Functionally, component of the DNA-dependent RNA polymerase that catalyzes the transcription in the cytoplasm of viral DNA into RNA using the four ribonucleoside triphosphates as substrates. The chain is Probable DNA-directed RNA polymerase subunit 343L from Acheta domesticus (House cricket).